A 227-amino-acid polypeptide reads, in one-letter code: Probable N-acetyltransferase family 8 member 5 (227 aa).

Transmembrane regions (helical) follow at residues 29 to 49, 53 to 73, and 201 to 221; these read IPAA…LFVM, IVLV…LLLL, and ISII…SFPS. One can recognise an N-acetyltransferase domain in the interval 69–213; sequence FLLLLLRLLA…IKWLITFSII (145 aa).

It belongs to the camello family.

Its subcellular location is the membrane. Functionally, may play a role in regulation of gastrulation. In Mus musculus (Mouse), this protein is Probable N-acetyltransferase family 8 member 5.